A 556-amino-acid chain; its full sequence is Formate--tetrahydrofolate ligase 2 (556 aa).

Residue 65-72 (TPAGEGKS) participates in ATP binding.

Belongs to the formate--tetrahydrofolate ligase family.

It catalyses the reaction (6S)-5,6,7,8-tetrahydrofolate + formate + ATP = (6R)-10-formyltetrahydrofolate + ADP + phosphate. It functions in the pathway one-carbon metabolism; tetrahydrofolate interconversion. The chain is Formate--tetrahydrofolate ligase 2 from Streptococcus sanguinis (strain SK36).